Consider the following 241-residue polypeptide: ATP synthase subunit 4, mitochondrial (241 aa).

The transit peptide at 1–35 directs the protein to the mitochondrion; it reads MASRLARTAVGAARLRPSVVPRVLPALSTVASPRY.

Belongs to the eukaryotic ATPase B chain family. In terms of assembly, F-type ATPases have 2 components, CF(1) - the catalytic core - and CF(0) - the membrane proton channel. In yeast, the dimeric form of ATP synthase consists of 17 polypeptides: alpha, beta, gamma, delta, epsilon, 4 (B), 5 (OSCP), 6 (A), 8, 9 (C), d, E (Tim11), f, g, h, i/j and k.

The protein localises to the mitochondrion. It is found in the mitochondrion inner membrane. Mitochondrial membrane ATP synthase (F(1)F(0) ATP synthase or Complex V) produces ATP from ADP in the presence of a proton gradient across the membrane which is generated by electron transport complexes of the respiratory chain. F-type ATPases consist of two structural domains, F(1) - containing the extramembraneous catalytic core, and F(0) - containing the membrane proton channel, linked together by a central stalk and a peripheral stalk. During catalysis, ATP synthesis in the catalytic domain of F(1) is coupled via a rotary mechanism of the central stalk subunits to proton translocation. Part of the complex F(0) domain and the peripheric stalk, which acts as a stator to hold the catalytic alpha(3)beta(3) subcomplex and subunit a/atp6 static relative to the rotary elements. In Neurospora crassa (strain ATCC 24698 / 74-OR23-1A / CBS 708.71 / DSM 1257 / FGSC 987), this protein is ATP synthase subunit 4, mitochondrial (atp-3).